The sequence spans 120 residues: Small ribosomal subunit protein uS13 (120 aa).

The disordered stretch occupies residues 93 to 120 (RKGLPVRGQTTKNNARTRKGKKKTVGSK). Over residues 107 to 120 (ARTRKGKKKTVGSK) the composition is skewed to basic residues.

Belongs to the universal ribosomal protein uS13 family. Part of the 30S ribosomal subunit. Forms a loose heterodimer with protein S19. Forms two bridges to the 50S subunit in the 70S ribosome.

Its function is as follows. Located at the top of the head of the 30S subunit, it contacts several helices of the 16S rRNA. In the 70S ribosome it contacts the 23S rRNA (bridge B1a) and protein L5 of the 50S subunit (bridge B1b), connecting the 2 subunits; these bridges are implicated in subunit movement. Contacts the tRNAs in the A and P-sites. This is Small ribosomal subunit protein uS13 from Helicobacter acinonychis (strain Sheeba).